The following is a 377-amino-acid chain: Protein-arginine rhamnosyltransferase (377 aa).

Residue Tyr15 participates in dTDP-beta-L-rhamnose binding. Residue Asp17 is the Proton acceptor of the active site. DTDP-beta-L-rhamnose contacts are provided by residues Tyr193, Gln255, and 271 to 275 (RGEDS). Glu273 is an active-site residue.

Belongs to the glycosyltransferase 104 family.

The enzyme catalyses dTDP-beta-L-rhamnose + L-arginyl-[protein] = N(omega)-(alpha-L-rhamnosyl)-L-arginyl-[protein] + dTDP + H(+). Its function is as follows. Protein-arginine rhamnosyltransferase that catalyzes the transfer of a single rhamnose to elongation factor P (EF-P) on 'Lys-32', a modification required for EF-P-dependent rescue of polyproline stalled ribosomes. In Pseudomonas putida (strain ATCC 47054 / DSM 6125 / CFBP 8728 / NCIMB 11950 / KT2440), this protein is Protein-arginine rhamnosyltransferase.